The chain runs to 95 residues: Large ribosomal subunit protein uL23 (95 aa).

It belongs to the universal ribosomal protein uL23 family. As to quaternary structure, part of the 50S ribosomal subunit. Contacts protein L29, and trigger factor when it is bound to the ribosome.

Functionally, one of the early assembly proteins it binds 23S rRNA. One of the proteins that surrounds the polypeptide exit tunnel on the outside of the ribosome. Forms the main docking site for trigger factor binding to the ribosome. The protein is Large ribosomal subunit protein uL23 of Fusobacterium nucleatum subsp. nucleatum (strain ATCC 25586 / DSM 15643 / BCRC 10681 / CIP 101130 / JCM 8532 / KCTC 2640 / LMG 13131 / VPI 4355).